Consider the following 297-residue polypeptide: Palmitoyl-protein thioesterase ABHD10, mitochondrial (297 aa).

A mitochondrion-targeting transit peptide spans 1–43; the sequence is MAAWVPCRKWGWAAVSFGRHRGLIASLARKPPWAWWLSACRQK. The region spanning 69 to 181 is the AB hydrolase-1 domain; the sequence is IIFIPGYLSN…GVVTQFHSLP (113 aa). Active-site charge relay system residues include S143, D240, and H270.

Belongs to the AB hydrolase superfamily. Expressed in epididymal sperm but not in testicular sperm (at protein level).

Its subcellular location is the mitochondrion. It catalyses the reaction S-hexadecanoyl-L-cysteinyl-[protein] + H2O = L-cysteinyl-[protein] + hexadecanoate + H(+). The enzyme catalyses mycophenolic acid O-acyl-beta-D-glucuronide + H2O = mycophenolate + D-glucuronate + H(+). Its activity is regulated as follows. Inhibited by palmostatin-B. In terms of biological role, acts as an acyl-protein thioesterase that hydrolyzes fatty acids from acylated residues in proteins. Regulates the mitochondrial S-depalmitoylation of the nucleophilic active site residue of peroxiredoxin-5/PRDX5, a key antioxidant protein, therefore modulating mitochondrial antioxidant ability. Also catalyzes the deglucuronidation of mycophenolic acid acyl-glucuronide, an active metabolite of the immunosuppressant drug mycophenolate. The polypeptide is Palmitoyl-protein thioesterase ABHD10, mitochondrial (Rattus norvegicus (Rat)).